Here is a 1410-residue protein sequence, read N- to C-terminus: Condensin-1 complex subunit CAP-D2 (1410 aa).

Basic and acidic residues predominate over residues 469 to 480 (LEPTEHASKEST). Disordered regions lie at residues 469–492 (LEPT…DGEI), 504–525 (HQDS…EKDV), 860–879 (KTKK…NLEA), and 1208–1410 (KEQE…GSRS). Residues 869–879 (ESQNTEENLEA) are compositionally biased toward polar residues. Basic and acidic residues predominate over residues 1208 to 1226 (KEQEETARNAEVHREKTKT). Acidic residues-rich tracts occupy residues 1240–1284 (PVEE…EEPD) and 1306–1319 (IETE…DSEP). Residues 1323–1339 (QCGTTNPRSLNRKTSGD) show a composition bias toward polar residues. Over residues 1342–1365 (IETESEEEQSDSEEEPSDSEEEPD) the composition is skewed to acidic residues. Polar residues predominate over residues 1368–1379 (QCGTTNPRSLNQ).

It belongs to the CND1 (condensin subunit 1) family. In terms of assembly, component of the condensin complex. In terms of tissue distribution, present in buds.

Its subcellular location is the chromosome. The protein resides in the nucleus. Functionally, essential protein. Regulatory subunit of the condensin complex, a complex required for conversion of interphase chromatin into mitotic-like condense chromosomes. The condensin complex probably introduces positive supercoils into relaxed DNA in the presence of type I topoisomerases and converts nicked DNA into positive knotted forms in the presence of type II topoisomerases. Required for fertility, growth and euchromatin organization, but not for sister chromatid cohesion. Necessary to maintain normal structural integrity of the meiotic chromosomes during the two nuclear divisions of gametogenesis, especially to maintain compaction of the centromeric repeats and 45S rDNA. Also seems to be involved in crossover formation during meiotic prophase I. Prevents centromeric and pericentromeric heterochromatin repeats association. Contributes to the induction of stress-responsive genes in response to stress treatment. The protein is Condensin-1 complex subunit CAP-D2 of Arabidopsis thaliana (Mouse-ear cress).